Reading from the N-terminus, the 84-residue chain is Putative membrane protein insertion efficiency factor (84 aa).

This sequence belongs to the UPF0161 family.

The protein resides in the cell inner membrane. Its function is as follows. Could be involved in insertion of integral membrane proteins into the membrane. The protein is Putative membrane protein insertion efficiency factor of Shewanella pealeana (strain ATCC 700345 / ANG-SQ1).